The following is a 327-amino-acid chain: DNA-directed RNA polymerase subunit alpha (327 aa).

The interval 1–233 is alpha N-terminal domain (alpha-NTD); the sequence is MQNSASEFLK…DQLSIFADLQ (233 aa). The tract at residues 247–327 is alpha C-terminal domain (alpha-CTD); it reads VDPILLRPVD…NWPPAGLEKP (81 aa).

This sequence belongs to the RNA polymerase alpha chain family. Homodimer. The RNAP catalytic core consists of 2 alpha, 1 beta, 1 beta' and 1 omega subunit. When a sigma factor is associated with the core the holoenzyme is formed, which can initiate transcription.

It catalyses the reaction RNA(n) + a ribonucleoside 5'-triphosphate = RNA(n+1) + diphosphate. In terms of biological role, DNA-dependent RNA polymerase catalyzes the transcription of DNA into RNA using the four ribonucleoside triphosphates as substrates. This is DNA-directed RNA polymerase subunit alpha from Laribacter hongkongensis (strain HLHK9).